The chain runs to 254 residues: 5-oxoprolinase subunit A 1 (254 aa).

The protein belongs to the LamB/PxpA family. Forms a complex composed of PxpA, PxpB and PxpC.

It carries out the reaction 5-oxo-L-proline + ATP + 2 H2O = L-glutamate + ADP + phosphate + H(+). Functionally, catalyzes the cleavage of 5-oxoproline to form L-glutamate coupled to the hydrolysis of ATP to ADP and inorganic phosphate. The sequence is that of 5-oxoprolinase subunit A 1 from Burkholderia pseudomallei (strain K96243).